The chain runs to 88 residues: MANTSSAKKATRKIARRAAINKNRRSRVRTYVRQVEEALASGDKAAAQAAFKAAEPELMRAATKGVIHKNTASRKVSRLAARLKVLSA.

Residues 1–23 (MANTSSAKKATRKIARRAAINKN) are disordered.

The protein belongs to the bacterial ribosomal protein bS20 family.

Its function is as follows. Binds directly to 16S ribosomal RNA. The sequence is that of Small ribosomal subunit protein bS20 from Mesorhizobium japonicum (strain LMG 29417 / CECT 9101 / MAFF 303099) (Mesorhizobium loti (strain MAFF 303099)).